The following is a 167-amino-acid chain: Large ribosomal subunit protein uL10 (167 aa).

Belongs to the universal ribosomal protein uL10 family. In terms of assembly, part of the ribosomal stalk of the 50S ribosomal subunit. The N-terminus interacts with L11 and the large rRNA to form the base of the stalk. The C-terminus forms an elongated spine to which L12 dimers bind in a sequential fashion forming a multimeric L10(L12)X complex.

Forms part of the ribosomal stalk, playing a central role in the interaction of the ribosome with GTP-bound translation factors. The protein is Large ribosomal subunit protein uL10 of Flavobacterium johnsoniae (strain ATCC 17061 / DSM 2064 / JCM 8514 / BCRC 14874 / CCUG 350202 / NBRC 14942 / NCIMB 11054 / UW101) (Cytophaga johnsonae).